A 300-amino-acid chain; its full sequence is MKELIQRSRKSFTVVHPIESDVPDNVWVKCPSCRELIYHKQLAERMKVCRCGYHMRLTAREWLALLDEGSFVEYDAHLRPTDPLGFVSPKEAYADKLRETQRRTGLADVVVSGVGSIEGYRLSIAVCDFNFIGGSMGSVFGEKMARAAERAATLGIPLLTINTSGGARMQEGVIALMQLAKVNMALTRLAAARQPHIAVLVDPCYGGVTASYASVADIIIAEPGANIGFAGRRVIEQTIRQKLPADFQTAEFMLQHGMVDMVTPRSELHGVLAKLLRLYAAEGRSGAYSSEAVAPTLASI.

The 269-residue stretch at 26 to 294 folds into the CoA carboxyltransferase N-terminal domain; that stretch reads VWVKCPSCRE…SGAYSSEAVA (269 aa). Zn(2+) contacts are provided by cysteine 30, cysteine 33, cysteine 49, and cysteine 51. The C4-type zinc finger occupies 30-51; it reads CPSCRELIYHKQLAERMKVCRC.

This sequence belongs to the AccD/PCCB family. In terms of assembly, acetyl-CoA carboxylase is a heterohexamer composed of biotin carboxyl carrier protein (AccB), biotin carboxylase (AccC) and two subunits each of ACCase subunit alpha (AccA) and ACCase subunit beta (AccD). It depends on Zn(2+) as a cofactor.

It is found in the cytoplasm. The enzyme catalyses N(6)-carboxybiotinyl-L-lysyl-[protein] + acetyl-CoA = N(6)-biotinyl-L-lysyl-[protein] + malonyl-CoA. It participates in lipid metabolism; malonyl-CoA biosynthesis; malonyl-CoA from acetyl-CoA: step 1/1. Functionally, component of the acetyl coenzyme A carboxylase (ACC) complex. Biotin carboxylase (BC) catalyzes the carboxylation of biotin on its carrier protein (BCCP) and then the CO(2) group is transferred by the transcarboxylase to acetyl-CoA to form malonyl-CoA. This is Acetyl-coenzyme A carboxylase carboxyl transferase subunit beta 2 from Roseiflexus castenholzii (strain DSM 13941 / HLO8).